Here is a 65-residue protein sequence, read N- to C-terminus: Large ribosomal subunit protein uL29 (65 aa).

This sequence belongs to the universal ribosomal protein uL29 family.

The chain is Large ribosomal subunit protein uL29 from Lactobacillus johnsonii (strain CNCM I-12250 / La1 / NCC 533).